Reading from the N-terminus, the 188-residue chain is Elongation factor P (188 aa).

The protein belongs to the elongation factor P family.

The protein localises to the cytoplasm. It participates in protein biosynthesis; polypeptide chain elongation. In terms of biological role, involved in peptide bond synthesis. Stimulates efficient translation and peptide-bond synthesis on native or reconstituted 70S ribosomes in vitro. Probably functions indirectly by altering the affinity of the ribosome for aminoacyl-tRNA, thus increasing their reactivity as acceptors for peptidyl transferase. This chain is Elongation factor P, found in Methylobacterium radiotolerans (strain ATCC 27329 / DSM 1819 / JCM 2831 / NBRC 15690 / NCIMB 10815 / 0-1).